The following is a 629-amino-acid chain: 1-deoxy-D-xylulose-5-phosphate synthase (629 aa).

Thiamine diphosphate-binding positions include histidine 73 and 114–116; that span reads GHA. A Mg(2+)-binding site is contributed by aspartate 145. Thiamine diphosphate-binding positions include 146–147, asparagine 174, tyrosine 284, and glutamate 360; that span reads GA. Asparagine 174 is a Mg(2+) binding site.

Belongs to the transketolase family. DXPS subfamily. As to quaternary structure, homodimer. Mg(2+) serves as cofactor. Requires thiamine diphosphate as cofactor.

The enzyme catalyses D-glyceraldehyde 3-phosphate + pyruvate + H(+) = 1-deoxy-D-xylulose 5-phosphate + CO2. It functions in the pathway metabolic intermediate biosynthesis; 1-deoxy-D-xylulose 5-phosphate biosynthesis; 1-deoxy-D-xylulose 5-phosphate from D-glyceraldehyde 3-phosphate and pyruvate: step 1/1. Functionally, catalyzes the acyloin condensation reaction between C atoms 2 and 3 of pyruvate and glyceraldehyde 3-phosphate to yield 1-deoxy-D-xylulose-5-phosphate (DXP). This chain is 1-deoxy-D-xylulose-5-phosphate synthase, found in Thermomicrobium roseum (strain ATCC 27502 / DSM 5159 / P-2).